A 148-amino-acid polypeptide reads, in one-letter code: Ribonuclease H (148 aa).

The 142-residue stretch at 3–144 (DKEQVVIYTD…ADQLANRGVA (142 aa)) folds into the RNase H type-1 domain. Positions 12, 50, 72, and 136 each coordinate Mg(2+). Residues 125–148 (GHTGDPGNERADQLANRGVAELPR) are disordered.

Belongs to the RNase H family. Monomer. The cofactor is Mg(2+).

Its subcellular location is the cytoplasm. The catalysed reaction is Endonucleolytic cleavage to 5'-phosphomonoester.. Its function is as follows. Endonuclease that specifically degrades the RNA of RNA-DNA hybrids. This chain is Ribonuclease H, found in Pseudomonas aeruginosa (strain LESB58).